The following is a 430-amino-acid chain: Formate-dependent phosphoribosylglycinamide formyltransferase (430 aa).

N(1)-(5-phospho-beta-D-ribosyl)glycinamide is bound by residues 26 to 27 (EL) and Glu86. ATP contacts are provided by residues Arg118, Lys159, 199–202 (EEHI), and Glu207. An ATP-grasp domain is found at 123-319 (ETLVKEAKVP…EFALHLRAVL (197 aa)). Mg(2+) is bound by residues Glu276 and Glu288. Residues Asp295, Lys375, and 382-383 (RR) contribute to the N(1)-(5-phospho-beta-D-ribosyl)glycinamide site.

Belongs to the PurK/PurT family. As to quaternary structure, homodimer.

It catalyses the reaction N(1)-(5-phospho-beta-D-ribosyl)glycinamide + formate + ATP = N(2)-formyl-N(1)-(5-phospho-beta-D-ribosyl)glycinamide + ADP + phosphate + H(+). It participates in purine metabolism; IMP biosynthesis via de novo pathway; N(2)-formyl-N(1)-(5-phospho-D-ribosyl)glycinamide from N(1)-(5-phospho-D-ribosyl)glycinamide (formate route): step 1/1. Its function is as follows. Involved in the de novo purine biosynthesis. Catalyzes the transfer of formate to 5-phospho-ribosyl-glycinamide (GAR), producing 5-phospho-ribosyl-N-formylglycinamide (FGAR). Formate is provided by PurU via hydrolysis of 10-formyl-tetrahydrofolate. This chain is Formate-dependent phosphoribosylglycinamide formyltransferase, found in Pyrococcus horikoshii (strain ATCC 700860 / DSM 12428 / JCM 9974 / NBRC 100139 / OT-3).